A 331-amino-acid polypeptide reads, in one-letter code: Holliday junction branch migration complex subunit RuvB (331 aa).

The interval 1–182 (MDDRMVDQAL…FGVHLRLEYY (182 aa)) is large ATPase domain (RuvB-L). ATP contacts are provided by residues leucine 21, arginine 22, glycine 63, lysine 66, threonine 67, threonine 68, 129–131 (EDF), arginine 172, tyrosine 182, and arginine 219. Threonine 67 contributes to the Mg(2+) binding site. Residues 183-253 (NENDLKEIII…TTKQALQLLQ (71 aa)) are small ATPAse domain (RuvB-S). Residues 256–331 (AEGLDYIDHK…AYEHFKNFNK (76 aa)) form a head domain (RuvB-H) region. 3 residues coordinate DNA: arginine 292, arginine 311, and arginine 316.

It belongs to the RuvB family. Homohexamer. Forms an RuvA(8)-RuvB(12)-Holliday junction (HJ) complex. HJ DNA is sandwiched between 2 RuvA tetramers; dsDNA enters through RuvA and exits via RuvB. An RuvB hexamer assembles on each DNA strand where it exits the tetramer. Each RuvB hexamer is contacted by two RuvA subunits (via domain III) on 2 adjacent RuvB subunits; this complex drives branch migration. In the full resolvosome a probable DNA-RuvA(4)-RuvB(12)-RuvC(2) complex forms which resolves the HJ.

The protein resides in the cytoplasm. It catalyses the reaction ATP + H2O = ADP + phosphate + H(+). Functionally, the RuvA-RuvB-RuvC complex processes Holliday junction (HJ) DNA during genetic recombination and DNA repair, while the RuvA-RuvB complex plays an important role in the rescue of blocked DNA replication forks via replication fork reversal (RFR). RuvA specifically binds to HJ cruciform DNA, conferring on it an open structure. The RuvB hexamer acts as an ATP-dependent pump, pulling dsDNA into and through the RuvAB complex. RuvB forms 2 homohexamers on either side of HJ DNA bound by 1 or 2 RuvA tetramers; 4 subunits per hexamer contact DNA at a time. Coordinated motions by a converter formed by DNA-disengaged RuvB subunits stimulates ATP hydrolysis and nucleotide exchange. Immobilization of the converter enables RuvB to convert the ATP-contained energy into a lever motion, pulling 2 nucleotides of DNA out of the RuvA tetramer per ATP hydrolyzed, thus driving DNA branch migration. The RuvB motors rotate together with the DNA substrate, which together with the progressing nucleotide cycle form the mechanistic basis for DNA recombination by continuous HJ branch migration. Branch migration allows RuvC to scan DNA until it finds its consensus sequence, where it cleaves and resolves cruciform DNA. The polypeptide is Holliday junction branch migration complex subunit RuvB (Staphylococcus haemolyticus (strain JCSC1435)).